Consider the following 216-residue polypeptide: Serine/threonine-protein phosphatase 1 (216 aa).

4 residues coordinate Mn(2+): D24, H26, D53, and N79. Residue H80 is the Proton donor of the active site. Position 185 (H185) interacts with Mn(2+).

The protein belongs to the PPP phosphatase family. PP-1 subfamily. Mn(2+) serves as cofactor.

It catalyses the reaction O-phospho-L-seryl-[protein] + H2O = L-seryl-[protein] + phosphate. The catalysed reaction is O-phospho-L-threonyl-[protein] + H2O = L-threonyl-[protein] + phosphate. Its activity is regulated as follows. Inhibited by cadmium, copper, zinc when added cobalt when added concomitantly with manganese. In terms of biological role, can hydrolyze phosphorylated Ser-, Thr- or Tyr-substrates in vitro. The natural substrate is unknown. The chain is Serine/threonine-protein phosphatase 1 (pphA) from Salmonella typhimurium (strain LT2 / SGSC1412 / ATCC 700720).